We begin with the raw amino-acid sequence, 360 residues long: Magnesium transporter NIPA2 (360 aa).

Residues Met1–Asp9 lie on the Extracellular side of the membrane. A helical transmembrane segment spans residues Phe10–Leu30. Residues Lys31 to Glu56 are Cytoplasmic-facing. A helical membrane pass occupies residues Trp57–Tyr77. Residue Ala78 is a topological domain, extracellular. Residues Phe79–Leu99 traverse the membrane as a helical segment. The Cytoplasmic portion of the chain corresponds to Ser100–Arg107. Residues Leu108–Ile128 form a helical membrane-spanning segment. The Extracellular portion of the chain corresponds to His129 to Pro149. A helical membrane pass occupies residues Gly150–Gly170. The Cytoplasmic segment spans residues Pro171–Gln175. A helical transmembrane segment spans residues Thr176–Val196. Topologically, residues Lys197–His215 are extracellular. Residues Pro216–Leu236 form a helical membrane-spanning segment. At Asn237–Ser246 the chain is on the cytoplasmic side. Residues Ile247–Leu267 traverse the membrane as a helical segment. The Extracellular segment spans residues Phe268–Asp278. The chain crosses the membrane as a helical span at residues Val279–Phe299. The Cytoplasmic segment spans residues Lys300 to Phe360.

Belongs to the NIPA family. In terms of tissue distribution, widely expressed.

The protein localises to the cell membrane. It localises to the early endosome. The enzyme catalyses Mg(2+)(in) = Mg(2+)(out). Acts as a selective Mg(2+) transporter. This Homo sapiens (Human) protein is Magnesium transporter NIPA2 (NIPA2).